A 545-amino-acid chain; its full sequence is CTP synthase (545 aa).

An amidoligase domain region spans residues Met-1–Leu-266. Ser-14 is a binding site for CTP. Ser-14 is a UTP binding site. ATP contacts are provided by residues Ser-15–Ile-20 and Asp-72. Mg(2+) is bound by residues Asp-72 and Glu-140. Residues Asp-147 to Glu-149, Lys-187 to Gln-192, and Lys-223 contribute to the CTP site. UTP-binding positions include Lys-187–Gln-192 and Lys-223. Lys-239 to Ile-241 is an ATP binding site. In terms of domain architecture, Glutamine amidotransferase type-1 spans Thr-291 to Arg-542. Gly-352 contacts L-glutamine. Residue Cys-379 is the Nucleophile; for glutamine hydrolysis of the active site. L-glutamine contacts are provided by residues Leu-380 to Gln-383, Glu-403, and Arg-470. Active-site residues include His-515 and Glu-517.

It belongs to the CTP synthase family. In terms of assembly, homotetramer.

The enzyme catalyses UTP + L-glutamine + ATP + H2O = CTP + L-glutamate + ADP + phosphate + 2 H(+). The catalysed reaction is L-glutamine + H2O = L-glutamate + NH4(+). It catalyses the reaction UTP + NH4(+) + ATP = CTP + ADP + phosphate + 2 H(+). The protein operates within pyrimidine metabolism; CTP biosynthesis via de novo pathway; CTP from UDP: step 2/2. Allosterically activated by GTP, when glutamine is the substrate; GTP has no effect on the reaction when ammonia is the substrate. The allosteric effector GTP functions by stabilizing the protein conformation that binds the tetrahedral intermediate(s) formed during glutamine hydrolysis. Inhibited by the product CTP, via allosteric rather than competitive inhibition. Catalyzes the ATP-dependent amination of UTP to CTP with either L-glutamine or ammonia as the source of nitrogen. Regulates intracellular CTP levels through interactions with the four ribonucleotide triphosphates. The polypeptide is CTP synthase (Pectobacterium atrosepticum (strain SCRI 1043 / ATCC BAA-672) (Erwinia carotovora subsp. atroseptica)).